Consider the following 753-residue polypeptide: 5-methyltetrahydropteroyltriglutamate--homocysteine methyltransferase (753 aa).

Residues 17 to 20 (RELK) and lysine 117 each bind 5-methyltetrahydropteroyltri-L-glutamate. L-homocysteine-binding positions include 431–433 (IGS) and glutamate 484. L-methionine-binding positions include 431–433 (IGS) and glutamate 484. Residues 515–516 (RC) and tryptophan 561 each bind 5-methyltetrahydropteroyltri-L-glutamate. Aspartate 599 contacts L-homocysteine. Aspartate 599 is an L-methionine binding site. Position 605 (glutamate 605) interacts with 5-methyltetrahydropteroyltri-L-glutamate. The Zn(2+) site is built by histidine 641, cysteine 643, and glutamate 665. Histidine 694 (proton donor) is an active-site residue. Cysteine 726 is a Zn(2+) binding site.

Belongs to the vitamin-B12 independent methionine synthase family. Zn(2+) is required as a cofactor.

The catalysed reaction is 5-methyltetrahydropteroyltri-L-glutamate + L-homocysteine = tetrahydropteroyltri-L-glutamate + L-methionine. It functions in the pathway amino-acid biosynthesis; L-methionine biosynthesis via de novo pathway; L-methionine from L-homocysteine (MetE route): step 1/1. Catalyzes the transfer of a methyl group from 5-methyltetrahydrofolate to homocysteine resulting in methionine formation. The sequence is that of 5-methyltetrahydropteroyltriglutamate--homocysteine methyltransferase from Escherichia fergusonii (strain ATCC 35469 / DSM 13698 / CCUG 18766 / IAM 14443 / JCM 21226 / LMG 7866 / NBRC 102419 / NCTC 12128 / CDC 0568-73).